We begin with the raw amino-acid sequence, 165 residues long: 3-isopropylmalate dehydratase small subunit (165 aa).

It belongs to the LeuD family. LeuD type 2 subfamily. In terms of assembly, heterodimer of LeuC and LeuD.

It catalyses the reaction (2R,3S)-3-isopropylmalate = (2S)-2-isopropylmalate. Its pathway is amino-acid biosynthesis; L-leucine biosynthesis; L-leucine from 3-methyl-2-oxobutanoate: step 2/4. In terms of biological role, catalyzes the isomerization between 2-isopropylmalate and 3-isopropylmalate, via the formation of 2-isopropylmaleate. The sequence is that of 3-isopropylmalate dehydratase small subunit from Hydrogenobaculum sp. (strain Y04AAS1).